We begin with the raw amino-acid sequence, 318 residues long: Electron transfer flavoprotein subunit alpha (318 aa).

Leucine 257–aspartate 285 contacts FAD.

The protein belongs to the ETF alpha-subunit/FixB family. Heterodimer of an alpha and a beta subunit. FAD serves as cofactor.

The electron transfer flavoprotein serves as a specific electron acceptor for other dehydrogenases. It transfers the electrons to the main respiratory chain via ETF-ubiquinone oxidoreductase (ETF dehydrogenase). This is Electron transfer flavoprotein subunit alpha (etfA) from Mycobacterium tuberculosis (strain CDC 1551 / Oshkosh).